The sequence spans 280 residues: Thylakoid lumenal protein TL20.3, chloroplastic (280 aa).

A chloroplast-targeting transit peptide spans 1–59 (MAFSSLSPLPMKSLDISRSSSSVSRSPYHFQRYLLRRLQLSSRSNLEIKDSSNTREGCC). The N-terminal 31 residues, 60 to 90 (SSAESNTWKRILSAAMAAAVIASSSGVPAMA), are a transit peptide targeting the thylakoid. Pentapeptide repeat domains lie at 124-163 (ENFR…NFSG) and 169-208 (TLMD…DFSD).

In terms of assembly, interacts with thioredoxin. Interacts in vitro with LTO1.

The protein resides in the plastid. It localises to the chloroplast thylakoid lumen. Its function is as follows. Pentapeptide repeat protein of unknown function. Subject to degradation when reduced. This chain is Thylakoid lumenal protein TL20.3, chloroplastic, found in Arabidopsis thaliana (Mouse-ear cress).